Reading from the N-terminus, the 699-residue chain is Polyribonucleotide nucleotidyltransferase (699 aa).

Residues Asp487 and Asp493 each contribute to the Mg(2+) site. Residues 554 to 613 (PRMLNMKINPEKIRDVIGKGGAVIRALQEETGTVIEIEDDGSITISSVSAEGAQKAKARI) form the KH domain. An S1 motif domain is found at 623 to 691 (GKVYEGTVVR…ERGKIRLSMK (69 aa)).

It belongs to the polyribonucleotide nucleotidyltransferase family. It depends on Mg(2+) as a cofactor.

The protein localises to the cytoplasm. The enzyme catalyses RNA(n+1) + phosphate = RNA(n) + a ribonucleoside 5'-diphosphate. Functionally, involved in mRNA degradation. Catalyzes the phosphorolysis of single-stranded polyribonucleotides processively in the 3'- to 5'-direction. This chain is Polyribonucleotide nucleotidyltransferase, found in Azoarcus sp. (strain BH72).